We begin with the raw amino-acid sequence, 380 residues long: Cytochrome b (380 aa).

4 consecutive transmembrane segments (helical) span residues Phe34–Met54, Trp78–Ile99, Trp114–Leu134, and Phe179–Leu199. His84 and His98 together coordinate heme b. His183 and His197 together coordinate heme b. His202 serves as a coordination point for a ubiquinone. 4 consecutive transmembrane segments (helical) span residues Tyr227 to Ala247, Leu289 to His309, Ile321 to Gly341, and Phe348 to Pro368.

Belongs to the cytochrome b family. The cytochrome bc1 complex contains 3 respiratory subunits (MT-CYB, CYC1 and UQCRFS1), 2 core proteins (UQCRC1 and UQCRC2) and probably 6 low-molecular weight proteins. It depends on heme b as a cofactor.

Its subcellular location is the mitochondrion inner membrane. Its function is as follows. Component of the ubiquinol-cytochrome c reductase complex (complex III or cytochrome b-c1 complex) that is part of the mitochondrial respiratory chain. The b-c1 complex mediates electron transfer from ubiquinol to cytochrome c. Contributes to the generation of a proton gradient across the mitochondrial membrane that is then used for ATP synthesis. This chain is Cytochrome b (mt-cyb), found in Rana amurensis (Siberian wood frog).